The primary structure comprises 505 residues: 2-isopropylmalate synthase (505 aa).

The Pyruvate carboxyltransferase domain maps to 5–269 (IKIFDTTLRD…ETGIHTEYLY (265 aa)). Positions 14, 204, 206, and 240 each coordinate Mn(2+). The segment at 393 to 505 (SLLYFHTFTG…AVNRFELRKR (113 aa)) is regulatory domain.

This sequence belongs to the alpha-IPM synthase/homocitrate synthase family. LeuA type 1 subfamily. As to quaternary structure, homodimer. Mn(2+) is required as a cofactor.

It is found in the cytoplasm. The catalysed reaction is 3-methyl-2-oxobutanoate + acetyl-CoA + H2O = (2S)-2-isopropylmalate + CoA + H(+). It functions in the pathway amino-acid biosynthesis; L-leucine biosynthesis; L-leucine from 3-methyl-2-oxobutanoate: step 1/4. Its function is as follows. Catalyzes the condensation of the acetyl group of acetyl-CoA with 3-methyl-2-oxobutanoate (2-ketoisovalerate) to form 3-carboxy-3-hydroxy-4-methylpentanoate (2-isopropylmalate). The polypeptide is 2-isopropylmalate synthase (Sediminispirochaeta smaragdinae (strain DSM 11293 / JCM 15392 / SEBR 4228) (Spirochaeta smaragdinae)).